Reading from the N-terminus, the 436-residue chain is Acetyl-CoA decarbonylase/synthase complex subunit delta 1 (436 aa).

Belongs to the CdhD family. In terms of assembly, heterodimer of delta and gamma chains. The ACDS complex is made up of alpha, epsilon, beta, gamma and delta chains with a probable stoichiometry of (alpha(2)epsilon(2))(4)-beta(8)-(gamma(1)delta(1))(8) (Potential).

It participates in one-carbon metabolism; methanogenesis from acetate. Functionally, part of a complex that catalyzes the reversible cleavage of acetyl-CoA, allowing growth on acetate as sole source of carbon and energy. Probably maintains the overall quaternary structure of the ACDS complex. The polypeptide is Acetyl-CoA decarbonylase/synthase complex subunit delta 1 (cdhD1) (Methanosarcina acetivorans (strain ATCC 35395 / DSM 2834 / JCM 12185 / C2A)).